Reading from the N-terminus, the 428-residue chain is Trigger factor (428 aa).

Positions 163–248 (GDIVDIDFEG…VNDVKVKELP (86 aa)) constitute a PPIase FKBP-type domain.

Belongs to the FKBP-type PPIase family. Tig subfamily.

The protein localises to the cytoplasm. The catalysed reaction is [protein]-peptidylproline (omega=180) = [protein]-peptidylproline (omega=0). Functionally, involved in protein export. Acts as a chaperone by maintaining the newly synthesized protein in an open conformation. Functions as a peptidyl-prolyl cis-trans isomerase. In Acetivibrio thermocellus (strain ATCC 27405 / DSM 1237 / JCM 9322 / NBRC 103400 / NCIMB 10682 / NRRL B-4536 / VPI 7372) (Clostridium thermocellum), this protein is Trigger factor.